Here is a 761-residue protein sequence, read N- to C-terminus: Elongation factor G, mitochondrial (761 aa).

Residues 1–42 (MSVQKMMWVPRKMVGGRIPFFTCSKVFSGFSRRSFHESPLAR) constitute a mitochondrion transit peptide. Positions 68-349 (NKLRNIGISA…AIVDYLPNPS (282 aa)) constitute a tr-type G domain. Residues 77–84 (AHIDSGKT), 148–152 (DTPGH), and 202–205 (NKMD) contribute to the GTP site.

It belongs to the TRAFAC class translation factor GTPase superfamily. Classic translation factor GTPase family. EF-G/EF-2 subfamily. In terms of processing, the precursor is processed in two steps involving mitochondrial intermediate peptidase (MIP) and mitochondrial processing peptidase (MPP).

The protein localises to the mitochondrion. It participates in protein biosynthesis; polypeptide chain elongation. Functionally, mitochondrial GTPase that catalyzes the GTP-dependent ribosomal translocation step during translation elongation. During this step, the ribosome changes from the pre-translocational (PRE) to the post-translocational (POST) state as the newly formed A-site-bound peptidyl-tRNA and P-site-bound deacylated tRNA move to the P and E sites, respectively. Catalyzes the coordinated movement of the two tRNA molecules, the mRNA and conformational changes in the ribosome. The polypeptide is Elongation factor G, mitochondrial (Saccharomyces cerevisiae (strain ATCC 204508 / S288c) (Baker's yeast)).